Here is a 585-residue protein sequence, read N- to C-terminus: Glutamine--tRNA ligase (585 aa).

The 'HIGH' region signature appears at 51–61; that stretch reads PEPNGYLHIGH. ATP contacts are provided by residues 52–54 and 58–64; these read EPN and HIGHAKS. D84 and Y238 together coordinate L-glutamine. ATP-binding positions include T257 and 292-293; that span reads RL. The 'KMSKS' region motif lies at 299–303; it reads ITSKR.

It belongs to the class-I aminoacyl-tRNA synthetase family. In terms of assembly, monomer.

It is found in the cytoplasm. The catalysed reaction is tRNA(Gln) + L-glutamine + ATP = L-glutaminyl-tRNA(Gln) + AMP + diphosphate. This chain is Glutamine--tRNA ligase, found in Cupriavidus taiwanensis (strain DSM 17343 / BCRC 17206 / CCUG 44338 / CIP 107171 / LMG 19424 / R1) (Ralstonia taiwanensis (strain LMG 19424)).